The sequence spans 316 residues: Acetyl-coenzyme A carboxylase carboxyl transferase subunit beta (316 aa).

In terms of domain architecture, CoA carboxyltransferase N-terminal spans 29–298 (LWTKCPNCGV…LLSPLNSHHH (270 aa)). Zn(2+)-binding residues include Cys33, Cys36, Cys52, and Cys55. The C4-type zinc-finger motif lies at 33-55 (CPNCGVLAYTKDLLANQLVCLDC).

It belongs to the AccD/PCCB family. In terms of assembly, acetyl-CoA carboxylase is a heterohexamer composed of biotin carboxyl carrier protein (AccB), biotin carboxylase (AccC) and two subunits each of ACCase subunit alpha (AccA) and ACCase subunit beta (AccD). The cofactor is Zn(2+).

It localises to the cytoplasm. It catalyses the reaction N(6)-carboxybiotinyl-L-lysyl-[protein] + acetyl-CoA = N(6)-biotinyl-L-lysyl-[protein] + malonyl-CoA. It participates in lipid metabolism; malonyl-CoA biosynthesis; malonyl-CoA from acetyl-CoA: step 1/1. Its function is as follows. Component of the acetyl coenzyme A carboxylase (ACC) complex. Biotin carboxylase (BC) catalyzes the carboxylation of biotin on its carrier protein (BCCP) and then the CO(2) group is transferred by the transcarboxylase to acetyl-CoA to form malonyl-CoA. This Microcystis aeruginosa (strain NIES-843 / IAM M-2473) protein is Acetyl-coenzyme A carboxylase carboxyl transferase subunit beta.